The following is a 361-amino-acid chain: Caspase activity and apoptosis inhibitor 1 (361 aa).

Positions 1–14 are enriched in basic residues; it reads MTGKKSSREKRRKR. Disordered regions lie at residues 1–28 and 67–100; these read MTGKKSSREKRRKRSSQEAAAALAAPDI and GGSGGSCWGGSSVERSERRKRRSTDSSSVSGSLQ. The segment covering 19–28 has biased composition (low complexity); that stretch reads AAAALAAPDI. At Ser-89 the chain carries Phosphoserine. Residue Thr-90 is modified to Phosphothreonine. A Glycyl lysine isopeptide (Lys-Gly) (interchain with G-Cter in SUMO2) cross-link involves residue Lys-104. Ser-120 and Ser-203 each carry phosphoserine. 2 disordered regions span residues 198-218 and 230-331; these read DNGMDSDMEEEADDGSKMGSD and ASSV…DVQP. The segment covering 199-210 has biased composition (acidic residues); the sequence is NGMDSDMEEEAD. Residues 234–251 show a composition bias toward basic and acidic residues; it reads RENKQPEGLELKQGKGED. Low complexity predominate over residues 272–281; that stretch reads EEAAAPEAPE. Residues 281–311 are a coiled coil; that stretch reads ENTVQSEAGQIDDLEKDIEKSVNEILGLAES. Phosphoserine is present on Ser-312.

As to expression, ubiquitous.

Functionally, anti-apoptotic protein that modulates a caspase-10 dependent mitochondrial caspase-3/9 feedback amplification loop. The chain is Caspase activity and apoptosis inhibitor 1 (CAAP1) from Homo sapiens (Human).